A 542-amino-acid chain; its full sequence is Putative inactive cadmium/zinc-transporting ATPase HMA3 (542 aa).

The Cytoplasmic segment spans residues 1 to 89; that stretch reads MAEGEESKKM…VRPYGETSLK (89 aa). One can recognise an HMA domain in the interval 13–79; the sequence is QTSYFDVVGI…ALNQARLEAS (67 aa). The helical transmembrane segment at 90–111 threads the bilayer; sequence SQWPSPFAIVSGVLLVLSFFKY. Over 112 to 114 the chain is Extracellular; it reads FYS. Residues 115–134 traverse the membrane as a helical segment; the sequence is PLEWLAIVAVVAGVFPILAK. At 135–141 the chain is on the cytoplasmic side; the sequence is AVASVTR. The helical transmembrane segment at 142–162 threads the bilayer; it reads FRLDINALTLIAVIATLCMQD. A topological domain (extracellular) is located at residue Phe163. The chain crosses the membrane as a helical span at residues 164 to 184; it reads TEAATIVFLFSVADWLESSAA. Residues 185 to 310 lie on the Cytoplasmic side of the membrane; that stretch reads HKASIVMSSL…QTKTQRFIDK (126 aa). The chain crosses the membrane as a helical span at residues 311–333; sequence CSRYYTPAVVVSAACFAVIPVLL. Residues 334 to 341 are Extracellular-facing; it reads KVQDLSHW. The helical transmembrane segment at 342 to 359 threads the bilayer; the sequence is FHLALVVLVSGCPCGLIL. At 360 to 542 the chain is on the cytoplasmic side; that stretch reads STPVATFCAL…VAQALKELKS (183 aa).

This sequence belongs to the cation transport ATPase (P-type) (TC 3.A.3) family. Type IB subfamily.

It is found in the membrane. This is Putative inactive cadmium/zinc-transporting ATPase HMA3 (HMA3) from Arabidopsis thaliana (Mouse-ear cress).